A 163-amino-acid chain; its full sequence is Putative 4-hydroxy-4-methyl-2-oxoglutarate aldolase (163 aa).

Residues 76 to 79 and arginine 98 each bind substrate; that span reads GDML. An a divalent metal cation-binding site is contributed by aspartate 99.

Belongs to the class II aldolase/RraA-like family. In terms of assembly, homotrimer. It depends on a divalent metal cation as a cofactor.

The enzyme catalyses 4-hydroxy-4-methyl-2-oxoglutarate = 2 pyruvate. It catalyses the reaction oxaloacetate + H(+) = pyruvate + CO2. Functionally, catalyzes the aldol cleavage of 4-hydroxy-4-methyl-2-oxoglutarate (HMG) into 2 molecules of pyruvate. Also contains a secondary oxaloacetate (OAA) decarboxylase activity due to the common pyruvate enolate transition state formed following C-C bond cleavage in the retro-aldol and decarboxylation reactions. This Pseudomonas fluorescens (strain ATCC BAA-477 / NRRL B-23932 / Pf-5) protein is Putative 4-hydroxy-4-methyl-2-oxoglutarate aldolase.